The primary structure comprises 549 residues: Cation/acetate symporter ActP (549 aa).

13 helical membrane passes run 33–53 (WQAI…TYWA), 77–97 (LAIA…ALVF), 103–123 (GLIY…LIAE), 148–168 (ILSA…QMVG), 183–203 (IAVV…GMLA), 206–226 (WVQI…AFMV), 262–282 (ISAL…PHIL), 303–323 (GFMG…IMLV), 355–375 (LFLG…VAGL), 404–424 (VSKI…VLFE), 428–448 (IAFM…PIIL), 464–484 (GGWL…TIWV), and 493–513 (IFPY…GIWF).

The protein belongs to the sodium:solute symporter (SSF) (TC 2.A.21) family.

The protein resides in the cell inner membrane. Its function is as follows. Transports acetate. This Escherichia coli O17:K52:H18 (strain UMN026 / ExPEC) protein is Cation/acetate symporter ActP.